We begin with the raw amino-acid sequence, 349 residues long: Fructose-bisphosphate aldolase 2, chloroplastic (349 aa).

Substrate is bound by residues arginine 47 and lysine 137. The active-site Proton acceptor is glutamate 177. The Schiff-base intermediate with dihydroxyacetone-P role is filled by lysine 219.

This sequence belongs to the class I fructose-bisphosphate aldolase family.

It is found in the plastid. Its subcellular location is the chloroplast. The catalysed reaction is beta-D-fructose 1,6-bisphosphate = D-glyceraldehyde 3-phosphate + dihydroxyacetone phosphate. Its pathway is carbohydrate degradation; glycolysis; D-glyceraldehyde 3-phosphate and glycerone phosphate from D-glucose: step 4/4. This is Fructose-bisphosphate aldolase 2, chloroplastic from Pisum sativum (Garden pea).